The primary structure comprises 369 residues: Glutamate 5-kinase (369 aa).

Residue Lys-9 participates in ATP binding. Substrate contacts are provided by Ser-49, Asp-136, and Asn-148. ATP contacts are provided by residues Thr-168 to Asp-169 and Thr-210 to Lys-216. The PUA domain maps to Arg-275 to Trp-355.

Belongs to the glutamate 5-kinase family.

It is found in the cytoplasm. The enzyme catalyses L-glutamate + ATP = L-glutamyl 5-phosphate + ADP. The protein operates within amino-acid biosynthesis; L-proline biosynthesis; L-glutamate 5-semialdehyde from L-glutamate: step 1/2. Catalyzes the transfer of a phosphate group to glutamate to form L-glutamate 5-phosphate. This chain is Glutamate 5-kinase, found in Neisseria meningitidis serogroup A / serotype 4A (strain DSM 15465 / Z2491).